A 702-amino-acid polypeptide reads, in one-letter code: Ribosomal RNA large subunit methyltransferase K/L (702 aa).

A THUMP domain is found at 43–154 (LVYQSLMWSR…KETASIALDL (112 aa)).

The protein belongs to the methyltransferase superfamily. RlmKL family.

The protein localises to the cytoplasm. It catalyses the reaction guanosine(2445) in 23S rRNA + S-adenosyl-L-methionine = N(2)-methylguanosine(2445) in 23S rRNA + S-adenosyl-L-homocysteine + H(+). The enzyme catalyses guanosine(2069) in 23S rRNA + S-adenosyl-L-methionine = N(2)-methylguanosine(2069) in 23S rRNA + S-adenosyl-L-homocysteine + H(+). Its function is as follows. Specifically methylates the guanine in position 2445 (m2G2445) and the guanine in position 2069 (m7G2069) of 23S rRNA. The sequence is that of Ribosomal RNA large subunit methyltransferase K/L from Shigella sonnei (strain Ss046).